The chain runs to 152 residues: Nucleoside diphosphate kinase A (152 aa).

ATP is bound by residues Lys12, Phe60, Arg88, and Thr94. A Glycyl lysine isopeptide (Lys-Gly) (interchain with G-Cter in ubiquitin) cross-link involves residue Lys100. The ATP site is built by Arg105 and Asn115. The active-site Pros-phosphohistidine intermediate is the His118. Residues Ser120, Ser122, and Ser125 each carry the phosphoserine modification.

The protein belongs to the NDK family. As to quaternary structure, hexamer of two different chains: An and B (A6, A5B, A4B2, A3B3, A2B4, AB5, B6). Interacts with PRUNE1. Component of the SET complex, composed of at least ANP32A, APEX1, HMGB2, NME1, SET and TREX1. Within this complex, interacts directly with SET. Also interacts with TREX1, but only following translocation to the nucleus. It depends on Mg(2+) as a cofactor. In terms of tissue distribution, isoform 1 is expressed in heart, brain, placenta, lung, liver, skeletal muscle, pancreas, spleen and thymus. Expressed in lung carcinoma cell lines but not in normal lung tissues. Isoform 2 is ubiquitously expressed and its expression is also related to tumor differentiation.

Its subcellular location is the cytoplasm. The protein resides in the nucleus. The enzyme catalyses a 2'-deoxyribonucleoside 5'-diphosphate + ATP = a 2'-deoxyribonucleoside 5'-triphosphate + ADP. The catalysed reaction is a ribonucleoside 5'-diphosphate + ATP = a ribonucleoside 5'-triphosphate + ADP. Autophosphorylation at His-118 increases serine/threonine protein kinase activity of the enzyme. Interaction with the SET complex inhibits the endonuclease activity. In terms of biological role, major role in the synthesis of nucleoside triphosphates other than ATP. The ATP gamma phosphate is transferred to the NDP beta phosphate via a ping-pong mechanism, using a phosphorylated active-site intermediate. Possesses nucleoside-diphosphate kinase, serine/threonine-specific protein kinase, geranyl and farnesyl pyrophosphate kinase, histidine protein kinase and 3'-5' exonuclease activities. Involved in cell proliferation, differentiation and development, signal transduction, G protein-coupled receptor endocytosis, and gene expression. Required for neural development including neural patterning and cell fate determination. During GZMA-mediated cell death, works in concert with TREX1. NME1 nicks one strand of DNA and TREX1 removes bases from the free 3' end to enhance DNA damage and prevent DNA end reannealing and rapid repair. The protein is Nucleoside diphosphate kinase A (NME1) of Homo sapiens (Human).